A 734-amino-acid chain; its full sequence is Regulator of G-protein signaling rgs-6 (734 aa).

Residues 1–24 (MSTPCSGNEPATPTNTSPNNETSN) are disordered. Positions 8–24 (NEPATPTNTSPNNETSN) are enriched in low complexity. The 112-residue stretch at 46–157 (IFKKVIRDPV…YDCWPRFLRS (112 aa)) folds into the RGS domain. Disordered regions lie at residues 162–236 (QPSF…SPTH), 489–515 (HAVS…YSPA), and 538–734 (VNAG…AAYV). A compositionally biased stretch (acidic residues) spans 166–176 (TDEELAADDED). Over residues 180–191 (HSQPTSLNNTNE) the composition is skewed to polar residues. Over residues 194–208 (AAAQQSQPAPNAPAA) the composition is skewed to low complexity. 2 stretches are compositionally biased toward polar residues: residues 494–506 (SDPN…SQDR) and 538–557 (VNAG…SKNR). Basic and acidic residues-rich tracts occupy residues 563–585 (SKTE…RSDD) and 606–619 (TTEE…KSGD). Positions 642–694 (AAAAAAGASPSTSAPSTSTSVQTKTTTSPTKSPTSTTITTSGTTTSATSSVAT) are enriched in low complexity. Polar residues-rich tracts occupy residues 705 to 715 (SASTPATSSQL) and 724 to 734 (RESSWQTAAYV).

The polypeptide is Regulator of G-protein signaling rgs-6 (Caenorhabditis elegans).